The sequence spans 395 residues: XK-related protein 8 (395 aa).

Over 1-12 (MPWSSRGALLRD) the chain is Cytoplasmic. Residues 13–33 (LVLGVLGTAAFLLDLGTDLWA) form a helical membrane-spanning segment. Topologically, residues 34–47 (AVQYALGGRYLWAA) are extracellular. A helical transmembrane segment spans residues 48–68 (LVLALLGLASVALQLFSWLWL). Residues 69 to 158 (RADPAGLHGS…VLAIMLQSGR (90 aa)) lie on the Cytoplasmic side of the membrane. A helical transmembrane segment spans residues 159 to 179 (AEYYQWVGICTSFLGISWALL). Residues 180–200 (DYHRALRTCLPSRPLLGLGSS) lie on the Extracellular side of the membrane. Residues 201 to 221 (VIYFLWNLLLLWPRVLAVALF) traverse the membrane as a helical segment. Topologically, residues 222 to 223 (SA) are cytoplasmic. A helical transmembrane segment spans residues 224 to 244 (LFPSYVALHFLGLWLVLLLWV). Topologically, residues 245–258 (WLQGTDFMPDPSSE) are extracellular. The chain crosses the membrane as a helical span at residues 259–279 (WLYQVTVATILYFSWFNVAEG). Residues 280-284 (RTRGR) lie on the Cytoplasmic side of the membrane. A helical membrane pass occupies residues 285 to 305 (AIIHFAFLLSDSILLVATWVT). The Extracellular portion of the chain corresponds to 306-312 (HSSWLPS). Residues 313–333 (GIPLQLWLPVGCGCFFLGLAL) traverse the membrane as a helical segment. The Cytoplasmic portion of the chain corresponds to 334–395 (RLVYYHWLHP…KDEAALPVKG (62 aa)). A Phosphoserine modification is found at serine 362. Residue threonine 375 is modified to Phosphothreonine.

It belongs to the XK family. Interacts with BSG and NPTN; which act as chaperones to localize XKR8 at the cell membrane. In terms of assembly, homodimer. Post-translationally, undergoes proteolytic processing by caspase-3 (CASP3), leading to its activation. In terms of processing, phosphorylation at Thr-375 activates the phospholipid scramblase activity.

The protein resides in the cell membrane. It localises to the cytoplasm. It is found in the perinuclear region. The catalysed reaction is a 1,2-diacyl-sn-glycero-3-phospho-L-serine(in) = a 1,2-diacyl-sn-glycero-3-phospho-L-serine(out). Its activity is regulated as follows. Activated upon caspase cleavage to generate the XK-related protein 8, processed form. Does not act prior the onset of apoptosis. In terms of biological role, phospholipid scramblase that promotes phosphatidylserine exposure on apoptotic cell surface. Phosphatidylserine is a specific marker only present at the surface of apoptotic cells and acts as a specific signal for engulfment. Required for the clearance of apoptotic cells, such as engulfment of apoptotic germ cells by Sertoli cells, clearance of senescent neutrophils or regulation of bipolar cell numbers in the retina. Has no effect on calcium-induced exposure of phosphatidylserine. Promotes myoblast differentiation and survival. The sequence is that of XK-related protein 8 from Pan troglodytes (Chimpanzee).